We begin with the raw amino-acid sequence, 146 residues long: Probable acetyltransferase HI_0677 (146 aa).

An N-acetyltransferase domain is found at 1-146 (MKLFKAEQWN…ERLFELSLSC (146 aa)).

The protein is Probable acetyltransferase HI_0677 of Haemophilus influenzae (strain ATCC 51907 / DSM 11121 / KW20 / Rd).